Here is a 237-residue protein sequence, read N- to C-terminus: Uridylate kinase (237 aa).

Residue 13-16 participates in ATP binding; that stretch reads KLSG. Glycine 53 is a binding site for UMP. Residues glycine 54 and arginine 58 each coordinate ATP. UMP is bound by residues aspartate 73 and 134–141; that span reads AGLPYFST. ATP is bound by residues asparagine 162, tyrosine 168, and aspartate 171.

It belongs to the UMP kinase family. In terms of assembly, homohexamer.

The protein localises to the cytoplasm. The enzyme catalyses UMP + ATP = UDP + ADP. It participates in pyrimidine metabolism; CTP biosynthesis via de novo pathway; UDP from UMP (UMPK route): step 1/1. Inhibited by UTP. Its function is as follows. Catalyzes the reversible phosphorylation of UMP to UDP. The polypeptide is Uridylate kinase (Leifsonia xyli subsp. xyli (strain CTCB07)).